The chain runs to 141 residues: uncharacterized protein (141 aa).

Helical transmembrane passes span 7-27, 47-67, 75-95, and 106-126; these read VAIM…AASL, SAVG…MLGV, AVLC…ILMF, and VIFV…WFVA.

The protein resides in the cell membrane. This is an uncharacterized protein from Bacillus subtilis (strain 168).